A 335-amino-acid polypeptide reads, in one-letter code: Nuclear transcription factor Y subunit gamma (335 aa).

It belongs to the NFYC/HAP5 subunit family. In terms of assembly, heterotrimeric transcription factor composed of three components, NF-YA, NF-YB and NF-YC. NF-YB and NF-YC must interact and dimerize for NF-YA association and DNA binding.

The protein localises to the nucleus. Component of the sequence-specific heterotrimeric transcription factor (NF-Y) which specifically recognizes a 5'-CCAAT-3' box motif found in the promoters of its target genes. NF-Y can function as both an activator and a repressor, depending on its interacting cofactors. The protein is Nuclear transcription factor Y subunit gamma (NFYC) of Pongo abelii (Sumatran orangutan).